We begin with the raw amino-acid sequence, 873 residues long: Valine--tRNA ligase (873 aa).

The 'HIGH' region signature appears at 46-56 (PNVTGKLHIGH). The 'KMSKS' region signature appears at 525 to 529 (KMSKS). Residue Lys528 coordinates ATP. The stretch at 804 to 873 (NDDFIDKEKM…ELIQDKLNKM (70 aa)) forms a coiled coil.

It belongs to the class-I aminoacyl-tRNA synthetase family. ValS type 1 subfamily. In terms of assembly, monomer.

It is found in the cytoplasm. It carries out the reaction tRNA(Val) + L-valine + ATP = L-valyl-tRNA(Val) + AMP + diphosphate. Functionally, catalyzes the attachment of valine to tRNA(Val). As ValRS can inadvertently accommodate and process structurally similar amino acids such as threonine, to avoid such errors, it has a 'posttransfer' editing activity that hydrolyzes mischarged Thr-tRNA(Val) in a tRNA-dependent manner. The sequence is that of Valine--tRNA ligase from Mesoplasma florum (strain ATCC 33453 / NBRC 100688 / NCTC 11704 / L1) (Acholeplasma florum).